Consider the following 287-residue polypeptide: uncharacterized protein (287 aa).

The first 31 residues, Met-1–Val-31, serve as a signal peptide directing secretion.

It belongs to the MG439/MG440 family.

This is an uncharacterized protein from Mycoplasma pneumoniae (strain ATCC 29342 / M129 / Subtype 1) (Mycoplasmoides pneumoniae).